Consider the following 148-residue polypeptide: Arginine repressor (148 aa).

This sequence belongs to the ArgR family.

The protein localises to the cytoplasm. It participates in amino-acid biosynthesis; L-arginine biosynthesis [regulation]. In terms of biological role, regulates arginine biosynthesis genes. This Koribacter versatilis (strain Ellin345) protein is Arginine repressor.